The sequence spans 901 residues: Protein translocase subunit SecA (901 aa).

Residues Gln87, 105–109 (GEGKT), and Asp512 each bind ATP. Positions 839–901 (QMEEQRRQES…KYKQCHGRLA (63 aa)) are disordered. The span at 841-850 (EEQRRQESER) shows a compositional bias: basic and acidic residues. Positions 885, 887, 896, and 897 each coordinate Zn(2+). Residues 891 to 901 (KKYKQCHGRLA) show a composition bias toward basic residues.

It belongs to the SecA family. In terms of assembly, monomer and homodimer. Part of the essential Sec protein translocation apparatus which comprises SecA, SecYEG and auxiliary proteins SecDF-YajC and YidC. Requires Zn(2+) as cofactor.

The protein resides in the cell inner membrane. It localises to the cytoplasm. The catalysed reaction is ATP + H2O + cellular proteinSide 1 = ADP + phosphate + cellular proteinSide 2.. In terms of biological role, part of the Sec protein translocase complex. Interacts with the SecYEG preprotein conducting channel. Has a central role in coupling the hydrolysis of ATP to the transfer of proteins into and across the cell membrane, serving both as a receptor for the preprotein-SecB complex and as an ATP-driven molecular motor driving the stepwise translocation of polypeptide chains across the membrane. The polypeptide is Protein translocase subunit SecA (Erwinia tasmaniensis (strain DSM 17950 / CFBP 7177 / CIP 109463 / NCPPB 4357 / Et1/99)).